Here is a 362-residue protein sequence, read N- to C-terminus: Methionine import ATP-binding protein MetN (362 aa).

One can recognise an ABC transporter domain in the interval 23-258 (VRLTDVKRRF…PQAEITGSLL (236 aa)). Residue 55 to 62 (GRSGAGKS) participates in ATP binding.

The protein belongs to the ABC transporter superfamily. Methionine importer (TC 3.A.1.24) family. The complex is composed of two ATP-binding proteins (MetN), two transmembrane proteins (MetI) and a solute-binding protein (MetQ).

Its subcellular location is the cell inner membrane. It carries out the reaction L-methionine(out) + ATP + H2O = L-methionine(in) + ADP + phosphate + H(+). The catalysed reaction is D-methionine(out) + ATP + H2O = D-methionine(in) + ADP + phosphate + H(+). Its function is as follows. Part of the ABC transporter complex MetNIQ involved in methionine import. Responsible for energy coupling to the transport system. This is Methionine import ATP-binding protein MetN from Rhizobium johnstonii (strain DSM 114642 / LMG 32736 / 3841) (Rhizobium leguminosarum bv. viciae).